The sequence spans 356 residues: DNA-directed RNA polymerase subunit alpha (356 aa).

Residues 1–230 (MNLHRISSEP…DLLKPLLKVE (230 aa)) are alpha N-terminal domain (alpha-NTD). Residues 267–356 (IDQPLLPADS…IRKSYGHILG (90 aa)) form an alpha C-terminal domain (alpha-CTD) region.

Belongs to the RNA polymerase alpha chain family. In terms of assembly, in plastids the minimal PEP RNA polymerase catalytic core is composed of four subunits: alpha, beta, beta', and beta''. When a (nuclear-encoded) sigma factor is associated with the core the holoenzyme is formed, which can initiate transcription.

It localises to the plastid. The protein localises to the chloroplast. The enzyme catalyses RNA(n) + a ribonucleoside 5'-triphosphate = RNA(n+1) + diphosphate. Functionally, DNA-dependent RNA polymerase catalyzes the transcription of DNA into RNA using the four ribonucleoside triphosphates as substrates. This chain is DNA-directed RNA polymerase subunit alpha, found in Zygnema circumcarinatum (Green alga).